Reading from the N-terminus, the 101-residue chain is MARPLEQAVAAIVCTFQEYAGRCGDKYKLCQAELKELLQKELATWTPTEFRECDYNKFMSVLDTNKDCEVDFVEYVRSLACLCLYCHEYFKDCPSEPPCSQ.

An N-acetylalanine modification is found at Ala-2. EF-hand domains are found at residues 12–47 (IVCTFQEYAGRCGDKYKLCQAELKELLQKELATWTP) and 50–85 (FRECDYNKFMSVLDTNKDCEVDFVEYVRSLACLCLY). Residues Lys-28 and Glu-33 each contribute to the Ca(2+) site. A disulfide bridge connects residues Cys-30 and Cys-68. Citrulline; by PAD3 is present on Arg-51. Ca(2+) contacts are provided by Asp-63, Asn-65, Asp-67, Glu-69, and Glu-74. A disulfide bond links Cys-81 and Cys-99. 4 residues coordinate Zn(2+): Cys-83, Cys-86, His-87, and Cys-93.

It belongs to the S-100 family. Homodimer and homotetramer for the citrullinated form. In terms of processing, more than half of the arginine residues undergo citrullination by PAD1 and PAD2. Arg-51 is specifically citrullinated by PAD3 and promotes tetramerization. As to expression, skin specific, specifically expressed at the inner endocuticle of hair fibers.

The protein localises to the cytoplasm. Its function is as follows. Binds both calcium and zinc. May be involved in calcium-dependent cuticle cell differentiation, hair shaft and hair cuticular barrier formation. This is Protein S100-A3 (S100A3) from Homo sapiens (Human).